Here is a 518-residue protein sequence, read N- to C-terminus: ATP synthase subunit beta 2 (518 aa).

Residue 154-161 participates in ATP binding; that stretch reads GGAGVGKT. Positions 455 to 518 are disordered; it reads IDEAKGKAKP…TDHAADTHES (64 aa). Basic and acidic residues-rich tracts occupy residues 473–485 and 507–518; these read PDSK…DPKP and PETDHAADTHES.

The protein belongs to the ATPase alpha/beta chains family. F-type ATPases have 2 components, CF(1) - the catalytic core - and CF(0) - the membrane proton channel. CF(1) has five subunits: alpha(3), beta(3), gamma(1), delta(1), epsilon(1). CF(0) has three main subunits: a(1), b(2) and c(9-12). The alpha and beta chains form an alternating ring which encloses part of the gamma chain. CF(1) is attached to CF(0) by a central stalk formed by the gamma and epsilon chains, while a peripheral stalk is formed by the delta and b chains.

The protein localises to the cell inner membrane. The enzyme catalyses ATP + H2O + 4 H(+)(in) = ADP + phosphate + 5 H(+)(out). Its function is as follows. Produces ATP from ADP in the presence of a proton gradient across the membrane. The catalytic sites are hosted primarily by the beta subunits. The protein is ATP synthase subunit beta 2 of Albidiferax ferrireducens (strain ATCC BAA-621 / DSM 15236 / T118) (Rhodoferax ferrireducens).